We begin with the raw amino-acid sequence, 440 residues long: UPF0489 protein C5orf22 homolog (440 aa).

The segment at 187–207 (VEGSSSGIQSSTSESSEDGLM) is disordered. Positions 188 to 200 (EGSSSGIQSSTSE) are enriched in low complexity.

This sequence belongs to the UPF0489 family.

This chain is UPF0489 protein C5orf22 homolog, found in Xenopus tropicalis (Western clawed frog).